Consider the following 619-residue polypeptide: Thiohydroximate-O-sulfate sulfur/sulfate-lyase (nitrile-forming) NSP4 (619 aa).

Jacalin-type lectin domains follow at residues 2 to 142 (AQKV…YFAP) and 151 to 292 (AKKL…YISL). Kelch repeat units lie at residues 326 to 374 (KIYS…VCMV), 379 to 425 (TLYV…SMAA), 429 to 478 (NVYV…VVQG), 480 to 524 (VWVV…ASAA), and 528 to 583 (HIVI…GWTA). Arginine 386 (proton donor) is an active-site residue. Arginine 386, serine 419, arginine 441, glycine 470, and valine 519 together coordinate a (Z)-N-(sulfonatooxy)alkanimidothioate. Arginine 441 functions as the Proton donor in the catalytic mechanism. Fe(2+) contacts are provided by glutamate 535, aspartate 539, and histidine 543. A (Z)-N-(sulfonatooxy)alkanimidothioate is bound at residue tryptophan 581.

The protein belongs to the jacalin lectin family. Fe(2+) serves as cofactor. As to expression, mainly expressed in roots, and, to a lower extent, in seedlings and leaves. Observed in seeds.

It carries out the reaction a (Z)-N-(sulfonatooxy)alkanimidothioate = a nitrile + sulfur + sulfate. The catalysed reaction is (Z)-phenyl-N-(sulfonatooxy)methanimidothioate = phenylacetonitrile + sulfur + sulfate. It catalyses the reaction (Z)-N-(sulfonatooxy)prop-2-enimidothioate = but-3-enenitrile + sulfur + sulfate. Specifier protein that contributes to constitutive and herbivore-induced simple nitrile formation. Promotes simple nitriles, but not epithionitrile or thiocyanate formation. Converts allylglucosinolate and benzylglucosinolate (glucotropaeolin) to their corresponding simple nitriles in the presence of myrosinase. This is Thiohydroximate-O-sulfate sulfur/sulfate-lyase (nitrile-forming) NSP4 from Arabidopsis thaliana (Mouse-ear cress).